A 120-amino-acid polypeptide reads, in one-letter code: Large ribosomal subunit protein uL22 (120 aa).

Belongs to the universal ribosomal protein uL22 family. As to quaternary structure, part of the 50S ribosomal subunit.

Its function is as follows. This protein binds specifically to 23S rRNA; its binding is stimulated by other ribosomal proteins, e.g. L4, L17, and L20. It is important during the early stages of 50S assembly. It makes multiple contacts with different domains of the 23S rRNA in the assembled 50S subunit and ribosome. The globular domain of the protein is located near the polypeptide exit tunnel on the outside of the subunit, while an extended beta-hairpin is found that lines the wall of the exit tunnel in the center of the 70S ribosome. This chain is Large ribosomal subunit protein uL22, found in Oenococcus oeni (strain ATCC BAA-331 / PSU-1).